Reading from the N-terminus, the 746-residue chain is Transcription factor pbcR (746 aa).

Over residues 1 to 12 (MYPWSSTGTSPF) the composition is skewed to polar residues. The disordered stretch occupies residues 1–40 (MYPWSSTGTSPFSHPDNEGAESGDMSMGEEQQQPHQRRQK). The segment at residues 47-76 (CQSCRASKVRCDQPNPGMPCLRCQKSGKPC) is a DNA-binding region (zn(2)-C6 fungal-type). Positions 109 to 131 (ELQDSAGDGETAHSTALRSPSQL) are disordered. The segment covering 120 to 131 (AHSTALRSPSQL) has biased composition (polar residues).

The protein resides in the nucleus. In terms of biological role, transcription factor; part of the gene cluster that mediates the biosynthesis of the diterpene ent-pimara-8(14),15-diene (PD). Acts as a positive regulator for the cluster gene. Down-regulates the expression of the penicillin gene cluster, two putative polyketide clusters, and one putative nonribosomal peptide cluster. The sequence is that of Transcription factor pbcR from Emericella nidulans (strain FGSC A4 / ATCC 38163 / CBS 112.46 / NRRL 194 / M139) (Aspergillus nidulans).